A 388-amino-acid chain; its full sequence is Na(+)/H(+) antiporter NhaA (388 aa).

The next 11 membrane-spanning stretches (helical) occupy residues 8-28 (FFSAASGGAIILLLSALLGLL), 57-77 (LAEFISIAPMSLFFFVVIAEI), 93-113 (ILPLISALGGMMIPACLYGLI), 123-143 (GWAIPIATDAAFTLPIILALG), 152-172 (VWLMALAIFDDLLGIVVIALF), 175-195 (SHLNGYALFAAGLITAVMIGL), 210-230 (GVVLWWALLVSGLHPTIAGVI), 254-274 (IIAPWVTWLILPLFGFVSMGM), 278-298 (AMSFHVLLAPVPLGVALGLFL), 328-348 (LFGLSLLCGIGFTISLFIAEL), and 361-381 (YGILMGSLLSALAGWLWLRFL).

Belongs to the NhaA Na(+)/H(+) (TC 2.A.33) antiporter family.

It is found in the cell inner membrane. It catalyses the reaction Na(+)(in) + 2 H(+)(out) = Na(+)(out) + 2 H(+)(in). In terms of biological role, na(+)/H(+) antiporter that extrudes sodium in exchange for external protons. In Zymomonas mobilis subsp. mobilis (strain ATCC 31821 / ZM4 / CP4), this protein is Na(+)/H(+) antiporter NhaA.